Here is a 127-residue protein sequence, read N- to C-terminus: Small ribosomal subunit protein eS8 (127 aa).

The tract at residues M1 to R25 is disordered.

It belongs to the eukaryotic ribosomal protein eS8 family. Part of the 30S ribosomal subunit.

The chain is Small ribosomal subunit protein eS8 from Thermoplasma volcanium (strain ATCC 51530 / DSM 4299 / JCM 9571 / NBRC 15438 / GSS1).